Here is a 216-residue protein sequence, read N- to C-terminus: Cytidylate kinase (216 aa).

7-15 (GPSGTGKST) contacts ATP.

This sequence belongs to the cytidylate kinase family. Type 1 subfamily.

The protein localises to the cytoplasm. The enzyme catalyses CMP + ATP = CDP + ADP. The catalysed reaction is dCMP + ATP = dCDP + ADP. The protein is Cytidylate kinase of Chlamydia pneumoniae (Chlamydophila pneumoniae).